A 159-amino-acid polypeptide reads, in one-letter code: MNRVLYPGTFDPITKGHGDLVERASRLFDHVIIAVAASPKKNPLFPLEQRVELAREVTKHLPNVEVIGFSSLLAHFAKEQGANVFLRGLRAVSDFEYEFQLANMNRQLAPDVESLFLTPSERYSFISSTLVREIAALGGDISKFVHPVVADALTERFKK.

Residue Thr9 participates in substrate binding. Residues 9–10 and His17 each bind ATP; that span reads TF. Substrate-binding residues include Lys41, Leu73, and Arg87. Residues 88-90, Glu98, and 123-129 contribute to the ATP site; these read GLR and YSFISST.

This sequence belongs to the bacterial CoaD family. As to quaternary structure, homohexamer. Mg(2+) serves as cofactor.

The protein localises to the cytoplasm. The catalysed reaction is (R)-4'-phosphopantetheine + ATP + H(+) = 3'-dephospho-CoA + diphosphate. It participates in cofactor biosynthesis; coenzyme A biosynthesis; CoA from (R)-pantothenate: step 4/5. Functionally, reversibly transfers an adenylyl group from ATP to 4'-phosphopantetheine, yielding dephospho-CoA (dPCoA) and pyrophosphate. The protein is Phosphopantetheine adenylyltransferase of Pseudomonas putida (strain ATCC 700007 / DSM 6899 / JCM 31910 / BCRC 17059 / LMG 24140 / F1).